The sequence spans 639 residues: Chaperone protein HtpG (639 aa).

The tract at residues 1-343 (MEATATKEHL…SNDLPLNVSR (343 aa)) is a; substrate-binding. Residues 344–564 (EILQESKDIE…THDMSGNLER (221 aa)) form a b region. The tract at residues 565 to 639 (LLKSAGQKVT…QLFLSTGSKE (75 aa)) is c.

The protein belongs to the heat shock protein 90 family. Homodimer.

It localises to the cytoplasm. Molecular chaperone. Has ATPase activity. This chain is Chaperone protein HtpG, found in Nitrosospira multiformis (strain ATCC 25196 / NCIMB 11849 / C 71).